The chain runs to 511 residues: Coatomer subunit delta (511 aa).

Over residues 168–177 (QARRDAERQG) the composition is skewed to basic and acidic residues. A disordered region spans residues 168 to 188 (QARRDAERQGKKAPGFGGFGS). Residue Ser-223 is modified to Phosphoserine. N6-acetyllysine is present on residues Lys-233 and Lys-241. A Phosphoserine modification is found at Ser-244. The 241-residue stretch at 271–511 (MESVHMKIEE…TFLVDKYEIL (241 aa)) folds into the MHD domain. 2 positions are modified to N6-acetyllysine: Lys-309 and Lys-351. Ser-493 bears the Phosphoserine mark.

The protein belongs to the adaptor complexes medium subunit family. Delta-COP subfamily. In terms of assembly, oligomeric complex that consists of at least the alpha, beta, beta', gamma, delta, epsilon and zeta subunits. In terms of tissue distribution, ubiquitously expressed.

The protein resides in the cytoplasm. It localises to the golgi apparatus membrane. It is found in the cytoplasmic vesicle. Its subcellular location is the COPI-coated vesicle membrane. Functionally, component of the coatomer, a cytosolic protein complex that binds to dilysine motifs and reversibly associates with Golgi non-clathrin-coated vesicles, which further mediate biosynthetic protein transport from the ER, via the Golgi up to the trans Golgi network. The coatomer complex is required for budding from Golgi membranes, and is essential for the retrograde Golgi-to-ER transport of dilysine-tagged proteins. In mammals, the coatomer can only be recruited by membranes associated to ADP-ribosylation factors (ARFs), which are small GTP-binding proteins; the complex also influences the Golgi structural integrity, as well as the processing, activity, and endocytic recycling of LDL receptors. The sequence is that of Coatomer subunit delta (ARCN1) from Homo sapiens (Human).